Consider the following 592-residue polypeptide: A-type ATP synthase subunit A (592 aa).

231-238 is an ATP binding site; sequence GGFGTGKT.

It belongs to the ATPase alpha/beta chains family. As to quaternary structure, has multiple subunits with at least A(3), B(3), C, D, E, F, H, I and proteolipid K(x).

The protein localises to the cell membrane. The catalysed reaction is ATP + H2O + 4 H(+)(in) = ADP + phosphate + 5 H(+)(out). Functionally, component of the A-type ATP synthase that produces ATP from ADP in the presence of a proton gradient across the membrane. The A chain is the catalytic subunit. The polypeptide is A-type ATP synthase subunit A (Staphylothermus marinus (strain ATCC 43588 / DSM 3639 / JCM 9404 / F1)).